Consider the following 93-residue polypeptide: Large ribosomal subunit protein uL23 (93 aa).

The protein belongs to the universal ribosomal protein uL23 family. In terms of assembly, part of the 50S ribosomal subunit. Contacts protein L29, and trigger factor when it is bound to the ribosome.

Functionally, one of the early assembly proteins it binds 23S rRNA. One of the proteins that surrounds the polypeptide exit tunnel on the outside of the ribosome. Forms the main docking site for trigger factor binding to the ribosome. The chain is Large ribosomal subunit protein uL23 from Helicobacter acinonychis (strain Sheeba).